The sequence spans 929 residues: MSTPIDSSRAASIVASILPYSRYLKRTLASEPGLQQELLDQLPNPFLWEEMLDFLQHPAISLEDEADLHRLLRQLRKRVILRLAARDLAGLADLNEVMTTMTALADTTIRFALEFLHTAMTHPGHFGKPTGEKTGTEQQLLIVAMGKLGGGELNVSSDVDLIFIYPEDGETDGRKSITNHEFFVRLGRKLIASLSDYTVDGYVFRVDMRLRPHGENSPLAISLPMLEDYFITQGREWERHAWIKSRVITGSSVAEATLMELIVRPFVFRKYLDFEAYEAMRSLHAQLRKEVDRRELHDNIKLGPGGIREIEFITQVFQLIRGGRDADLCIRPTLGVLRRLRQKQPLPGQTIEELTEAYCFLRKLEHRLQYLDDQQTQNLPQHPDEQTLIARSMGFTGYGDFLDHLDLHRQNVTRHFEQIFAARRKSPRHDTFARIRPEQSGDHETVEAFSKQLQTLGYLDPGKITARVRQFYDSTFFRQLTHSSQERIFELMPTLMEVIARFPPVDITLERILRLLEKIGQYPAYLALLQEHPQTLPRVAKLASVSQWASDYLGRHPILLDELLTSSGLHILPDWPALKTELTHQLHHVNIPKVQMVEWQMDVLRHFQHAQVFRLLVTDLEGDLLLEKLSDHLTELADLILDNVLQLAWQGLKKKHRELPAFAIIGYGKLGGKELGYASDLDIVFLYRDDHPDAASIYTKLAQNINLWLTSHTSAGILYETDLRLRPNGTSGLLVNSIEAFTQYQYEQAWVWEHQALTRARFVVGDREAGEMFEQMRKNMLCQPRDLVKLKREILMMRSKMLEAHPNPTPLFDIKHDRGGIIDVEFIVQYLVLGYAHRYPQLTGNIGNIALLKLAGELGLTSAGKATAALTAYRELRRTQHQLRLSGTPEPAGTALSRDVSQKFARVANNHLSDARQAVFQLWEDIFGT.

Residues 1 to 423 (MSTPIDSSRA…RHFEQIFAAR (423 aa)) are adenylyl removase. Residues 433-929 (ARIRPEQSGD…FQLWEDIFGT (497 aa)) form an adenylyl transferase region.

The protein belongs to the GlnE family. It depends on Mg(2+) as a cofactor.

It carries out the reaction [glutamine synthetase]-O(4)-(5'-adenylyl)-L-tyrosine + phosphate = [glutamine synthetase]-L-tyrosine + ADP. The enzyme catalyses [glutamine synthetase]-L-tyrosine + ATP = [glutamine synthetase]-O(4)-(5'-adenylyl)-L-tyrosine + diphosphate. In terms of biological role, involved in the regulation of glutamine synthetase GlnA, a key enzyme in the process to assimilate ammonia. When cellular nitrogen levels are high, the C-terminal adenylyl transferase (AT) inactivates GlnA by covalent transfer of an adenylyl group from ATP to specific tyrosine residue of GlnA, thus reducing its activity. Conversely, when nitrogen levels are low, the N-terminal adenylyl removase (AR) activates GlnA by removing the adenylyl group by phosphorolysis, increasing its activity. The regulatory region of GlnE binds the signal transduction protein PII (GlnB) which indicates the nitrogen status of the cell. This is Bifunctional glutamine synthetase adenylyltransferase/adenylyl-removing enzyme from Nitrosomonas europaea (strain ATCC 19718 / CIP 103999 / KCTC 2705 / NBRC 14298).